Here is a 359-residue protein sequence, read N- to C-terminus: Molybdenum import ATP-binding protein ModC (359 aa).

The region spanning 1 to 233 is the ABC transporter domain; that stretch reads MSGLTVSIRG…IDAESEGGGV (233 aa). 32–39 contributes to the ATP binding site; sequence GHSGAGKT. The 67-residue stretch at 289–355 folds into the Mop domain; sequence AISIRNLLPV…VKAVSVDRAA (67 aa).

Belongs to the ABC transporter superfamily. Molybdate importer (TC 3.A.1.8) family. The complex is composed of two ATP-binding proteins (ModC), two transmembrane proteins (ModB) and a solute-binding protein (ModA).

The protein localises to the cell inner membrane. The enzyme catalyses molybdate(out) + ATP + H2O = molybdate(in) + ADP + phosphate + H(+). Functionally, part of the ABC transporter complex ModABC involved in molybdenum import. Responsible for energy coupling to the transport system. This chain is Molybdenum import ATP-binding protein ModC, found in Brucella suis biovar 1 (strain 1330).